We begin with the raw amino-acid sequence, 555 residues long: Beta-caryophyllene synthase (555 aa).

Aspartate 313, aspartate 317, aspartate 456, and glutamate 464 together coordinate Mg(2+). The DDXXD motif signature appears at 313–317 (DDIYD).

This sequence belongs to the terpene synthase family. Mg(2+) is required as a cofactor.

It catalyses the reaction (2E,6E)-farnesyl diphosphate = (+)-(E)-beta-caryophyllene + diphosphate. It participates in secondary metabolite biosynthesis; terpenoid biosynthesis. Its function is as follows. Sesquiterpene synthase converting farnesyl diphosphate to beta-caryophyllene as the major product. The protein is Beta-caryophyllene synthase of Phyla dulcis (Aztec sweet herb).